Consider the following 79-residue polypeptide: Scutelatoxin (79 aa).

An N-terminal signal peptide occupies residues 1–21; that stretch reads MKTLLLTLVVMTIMCLDLGYT. 4 disulfide bridges follow: Cys24-Cys41, Cys34-Cys59, Cys63-Cys71, and Cys72-Cys77.

Belongs to the three-finger toxin family. Short-chain subfamily. Expressed by the venom gland.

It localises to the secreted. The polypeptide is Scutelatoxin (Oxyuranus scutellatus scutellatus (Australian taipan)).